A 146-amino-acid polypeptide reads, in one-letter code: FAD synthase (146 aa).

Residues 9–10 (TF), 14–17 (HPGH), and D92 contribute to the ATP site.

Belongs to the archaeal FAD synthase family. In terms of assembly, homodimer. A divalent metal cation is required as a cofactor.

It carries out the reaction FMN + ATP + H(+) = FAD + diphosphate. It functions in the pathway cofactor biosynthesis; FAD biosynthesis; FAD from FMN: step 1/1. Catalyzes the transfer of the AMP portion of ATP to flavin mononucleotide (FMN) to produce flavin adenine dinucleotide (FAD) coenzyme. The protein is FAD synthase of Halobacterium salinarum (strain ATCC 29341 / DSM 671 / R1).